Consider the following 274-residue polypeptide: Large ribosomal subunit protein uL2 (274 aa).

Residues V228–G254 are disordered. Residues P244–G254 are compositionally biased toward basic residues.

The protein belongs to the universal ribosomal protein uL2 family. In terms of assembly, part of the 50S ribosomal subunit. Forms a bridge to the 30S subunit in the 70S ribosome.

In terms of biological role, one of the primary rRNA binding proteins. Required for association of the 30S and 50S subunits to form the 70S ribosome, for tRNA binding and peptide bond formation. It has been suggested to have peptidyltransferase activity; this is somewhat controversial. Makes several contacts with the 16S rRNA in the 70S ribosome. This Azobacteroides pseudotrichonymphae genomovar. CFP2 protein is Large ribosomal subunit protein uL2.